Consider the following 138-residue polypeptide: Glutaredoxin-C7 (138 aa).

The tract at residues 17–40 is disordered; the sequence is SSTRGGGGGGMLGLTLFDPPGGEQ. The Glutaredoxin domain maps to 42–137; it reads AERIGRLVRE…PRLREVGALC (96 aa). Cysteines 62 and 65 form a disulfide.

Belongs to the glutaredoxin family. CC-type subfamily.

It localises to the cytoplasm. Has a glutathione-disulfide oxidoreductase activity in the presence of NADPH and glutathione reductase. Reduces low molecular weight disulfides and proteins. The polypeptide is Glutaredoxin-C7 (GRXC7) (Oryza sativa subsp. japonica (Rice)).